We begin with the raw amino-acid sequence, 452 residues long: Friend leukemia integration 1 transcription factor (452 aa).

At serine 39 the chain carries Phosphoserine. Positions 112–198 constitute a PNT domain; sequence PPPPNMTTNE…SHLSYLRESS (87 aa). The disordered stretch occupies residues 209–271; it reads DQSSRLSVKE…PYQILGPTSS (63 aa). Residues 215–226 are compositionally biased toward basic and acidic residues; it reads SVKEDPSYDSVR. Polar residues predominate over residues 248 to 257; sequence QTISKNTEQR. The ETS DNA-binding region spans 281-361; that stretch reads IQLWQFLLEL…HGKRYAYKFD (81 aa). A disordered region spans residues 433–452; it reads NPNVPRHPNTHVPSHLGSYY.

Belongs to the ETS family. Can form homodimers or heterodimers with ETV6/TEL1.

The protein resides in the nucleus. Functionally, sequence-specific transcriptional activator. Recognizes the DNA sequence 5'-C[CA]GGAAGT-3'. The chain is Friend leukemia integration 1 transcription factor (FLI1) from Homo sapiens (Human).